Here is a 153-residue protein sequence, read N- to C-terminus: NAD(P)H-quinone oxidoreductase subunit N (153 aa).

The protein belongs to the complex I NdhN subunit family. NDH-1 can be composed of about 15 different subunits; different subcomplexes with different compositions have been identified which probably have different functions.

The protein resides in the cellular thylakoid membrane. It carries out the reaction a plastoquinone + NADH + (n+1) H(+)(in) = a plastoquinol + NAD(+) + n H(+)(out). It catalyses the reaction a plastoquinone + NADPH + (n+1) H(+)(in) = a plastoquinol + NADP(+) + n H(+)(out). Functionally, NDH-1 shuttles electrons from an unknown electron donor, via FMN and iron-sulfur (Fe-S) centers, to quinones in the respiratory and/or the photosynthetic chain. The immediate electron acceptor for the enzyme in this species is believed to be plastoquinone. Couples the redox reaction to proton translocation, and thus conserves the redox energy in a proton gradient. Cyanobacterial NDH-1 also plays a role in inorganic carbon-concentration. This is NAD(P)H-quinone oxidoreductase subunit N from Synechococcus sp. (strain CC9311).